The primary structure comprises 294 residues: Diaminopimelate epimerase (294 aa).

Residues Asn13, Gln46, and Asn69 each contribute to the substrate site. Catalysis depends on Cys78, which acts as the Proton donor. Substrate is bound by residues Gly79 to Asn80, Asn173, Asn206, and Glu224 to Arg225. Cys233 functions as the Proton acceptor in the catalytic mechanism. Gly234–Thr235 is a substrate binding site.

It belongs to the diaminopimelate epimerase family. As to quaternary structure, homodimer.

Its subcellular location is the cytoplasm. It carries out the reaction (2S,6S)-2,6-diaminopimelate = meso-2,6-diaminopimelate. Its pathway is amino-acid biosynthesis; L-lysine biosynthesis via DAP pathway; DL-2,6-diaminopimelate from LL-2,6-diaminopimelate: step 1/1. In terms of biological role, catalyzes the stereoinversion of LL-2,6-diaminopimelate (L,L-DAP) to meso-diaminopimelate (meso-DAP), a precursor of L-lysine and an essential component of the bacterial peptidoglycan. The protein is Diaminopimelate epimerase of Variovorax paradoxus (strain S110).